A 231-amino-acid chain; its full sequence is Glutathione-specific gamma-glutamylcyclotransferase (231 aa).

49–54 provides a ligand contact to substrate; the sequence is IFGYGS. Glutamate 127 serves as the catalytic Proton acceptor.

It belongs to the gamma-glutamylcyclotransferase family. ChaC subfamily.

The enzyme catalyses glutathione = L-cysteinylglycine + 5-oxo-L-proline. Catalyzes the cleavage of glutathione into 5-oxo-L-proline and a Cys-Gly dipeptide. Acts specifically on glutathione, but not on other gamma-glutamyl peptides. The polypeptide is Glutathione-specific gamma-glutamylcyclotransferase (Escherichia coli (strain K12)).